Consider the following 447-residue polypeptide: BAG family molecular chaperone regulator 5 (447 aa).

BAG domains follow at residues 9-86 (SISR…EQNA), 95-167 (QNIF…EDCM), 182-260 (SVAK…DLEE), 275-350 (SILK…DLKE), and 365-442 (SHKA…DLKS).

Binds to the ATPase domain of HSP/HSP70 chaperones. Binds PRKN. Interacts with HSPA8 and JPH2. Expressed in the heart.

Its function is as follows. Co-chaperone for HSP/HSP70 proteins. It functions as a nucleotide-exchange factor promoting the release of ADP from HSP70, thereby activating HSP70-mediated protein refolding. Has an essential role in maintaining proteostasis at junctional membrane complexes (JMC), where it may function as a scaffold between the HSPA8 chaperone and JMC proteins enabling correct, HSPA8-dependent JMC protein folding. Inhibits both auto-ubiquitination of PRKN and ubiquitination of target proteins by PRKN. This Homo sapiens (Human) protein is BAG family molecular chaperone regulator 5 (BAG5).